Here is a 926-residue protein sequence, read N- to C-terminus: Taz1-interacting factor 1 (926 aa).

2 coiled-coil regions span residues 461–496 (REAV…SHQN) and 548–671 (SFTD…LKQK). A Phosphoserine modification is found at Ser-548. Residue Thr-550 is modified to Phosphothreonine. Position 552 is a phosphoserine (Ser-552).

This sequence belongs to the ATG11 family. In terms of assembly, homodimer and potential homooligomers. Interacts with taz1.

It localises to the preautophagosomal structure membrane. Its subcellular location is the vacuole membrane. Involved in cytoplasm to vacuole transport (Cvt), pexophagy, mitophagy and nucleophagy. Recruits mitochondria for their selective degradation via autophagy (mitophagy) during starvation. Works as scaffold proteins that recruit ATG proteins to the preautophagosome (PAS), the site of vesicle/autophagosome formation. Required for atg9 anterograde transport from the mitochondria to the PAS. Required for nitrogen starvation-induced sexual development and for entering the dormant G0 state. This chain is Taz1-interacting factor 1 (taf1), found in Schizosaccharomyces pombe (strain 972 / ATCC 24843) (Fission yeast).